A 140-amino-acid chain; its full sequence is Endoribonuclease YbeY (140 aa).

Residues H100, H104, and H110 each contribute to the Zn(2+) site.

This sequence belongs to the endoribonuclease YbeY family. The cofactor is Zn(2+).

The protein localises to the cytoplasm. Single strand-specific metallo-endoribonuclease involved in late-stage 70S ribosome quality control and in maturation of the 3' terminus of the 16S rRNA. In Helicobacter pylori (strain Shi470), this protein is Endoribonuclease YbeY.